We begin with the raw amino-acid sequence, 488 residues long: Katanin p60 ATPase-containing subunit A-like 1 (488 aa).

Residues 84-184 (FPNPVPEEGP…EQKKFDGTGY (101 aa)) form a disordered region. Over residues 144-167 (KPDRPNTRDGRGNKAKEEKSKRNA) the composition is skewed to basic and acidic residues. 246-253 (GPPGTGKT) is an ATP binding site.

This sequence belongs to the AAA ATPase family. Katanin p60 subunit A1 subfamily. A-like 1 sub-subfamily.

The protein localises to the cytoplasm. Its subcellular location is the cytoskeleton. It localises to the spindle pole. The protein resides in the spindle. The catalysed reaction is n ATP + n H2O + a microtubule = n ADP + n phosphate + (n+1) alpha/beta tubulin heterodimers.. Its function is as follows. Regulates microtubule dynamics in Sertoli cells, a process that is essential for spermiogenesis and male fertility. Severs microtubules in an ATP-dependent manner, promoting rapid reorganization of cellular microtubule arrays. The protein is Katanin p60 ATPase-containing subunit A-like 1 (katnal1) of Danio rerio (Zebrafish).